Here is a 214-residue protein sequence, read N- to C-terminus: RNA pyrophosphohydrolase (214 aa).

The region spanning 6–149 is the Nudix hydrolase domain; the sequence is GFRPNVGIIL…KRDVYQLALT (144 aa). The Nudix box signature appears at 38 to 59; the sequence is GGIKYGETPMQAMYRELHEETG.

It belongs to the Nudix hydrolase family. RppH subfamily. Requires a divalent metal cation as cofactor.

Its function is as follows. Accelerates the degradation of transcripts by removing pyrophosphate from the 5'-end of triphosphorylated RNA, leading to a more labile monophosphorylated state that can stimulate subsequent ribonuclease cleavage. This chain is RNA pyrophosphohydrolase, found in Burkholderia orbicola (strain MC0-3).